Reading from the N-terminus, the 710-residue chain is WD repeat-containing protein CG11141 (710 aa).

2 WD repeats span residues 31-70 (FFPA…MQKL) and 133-172 (LHKC…HLSK). The interval 283–307 (LNPKQRSEPSGTHHTSASTSSTRHS) is disordered. A compositionally biased stretch (low complexity) spans 292–307 (SGTHHTSASTSSTRHS). A Phosphothreonine modification is found at Thr-488. Phosphoserine is present on Ser-553. Disordered stretches follow at residues 612 to 635 (ASIQ…GEPV) and 685 to 710 (DPLA…FLDN). Composition is skewed to polar residues over residues 613–624 (SIQTSSRENATN) and 694–704 (PATSDSNTSSE).

The protein belongs to the WD repeat KIAA0329 family.

The protein is WD repeat-containing protein CG11141 of Drosophila melanogaster (Fruit fly).